The primary structure comprises 340 residues: Protein RecA (340 aa).

67–74 (GNESSGKT) lines the ATP pocket.

This sequence belongs to the RecA family.

It localises to the cytoplasm. Can catalyze the hydrolysis of ATP in the presence of single-stranded DNA, the ATP-dependent uptake of single-stranded DNA by duplex DNA, and the ATP-dependent hybridization of homologous single-stranded DNAs. It interacts with LexA causing its activation and leading to its autocatalytic cleavage. In Mycoplasma genitalium (strain ATCC 33530 / DSM 19775 / NCTC 10195 / G37) (Mycoplasmoides genitalium), this protein is Protein RecA.